The following is a 268-amino-acid chain: Ribosomal RNA small subunit methyltransferase A (268 aa).

S-adenosyl-L-methionine contacts are provided by Asn-18, Leu-20, Gly-45, Glu-66, Asp-91, and Asn-112.

It belongs to the class I-like SAM-binding methyltransferase superfamily. rRNA adenine N(6)-methyltransferase family. RsmA subfamily.

It is found in the cytoplasm. The enzyme catalyses adenosine(1518)/adenosine(1519) in 16S rRNA + 4 S-adenosyl-L-methionine = N(6)-dimethyladenosine(1518)/N(6)-dimethyladenosine(1519) in 16S rRNA + 4 S-adenosyl-L-homocysteine + 4 H(+). In terms of biological role, specifically dimethylates two adjacent adenosines (A1518 and A1519) in the loop of a conserved hairpin near the 3'-end of 16S rRNA in the 30S particle. May play a critical role in biogenesis of 30S subunits. This chain is Ribosomal RNA small subunit methyltransferase A, found in Shewanella oneidensis (strain ATCC 700550 / JCM 31522 / CIP 106686 / LMG 19005 / NCIMB 14063 / MR-1).